We begin with the raw amino-acid sequence, 308 residues long: tRNA dimethylallyltransferase (308 aa).

G9–T16 is a binding site for ATP. T11 to T16 is a substrate binding site. Interaction with substrate tRNA regions lie at residues D34–Q37 and Q158–R162.

It belongs to the IPP transferase family. As to quaternary structure, monomer. The cofactor is Mg(2+).

The enzyme catalyses adenosine(37) in tRNA + dimethylallyl diphosphate = N(6)-dimethylallyladenosine(37) in tRNA + diphosphate. Its function is as follows. Catalyzes the transfer of a dimethylallyl group onto the adenine at position 37 in tRNAs that read codons beginning with uridine, leading to the formation of N6-(dimethylallyl)adenosine (i(6)A). This is tRNA dimethylallyltransferase from Maricaulis maris (strain MCS10) (Caulobacter maris).